A 61-amino-acid chain; its full sequence is Large ribosomal subunit protein bL32 (61 aa).

This sequence belongs to the bacterial ribosomal protein bL32 family.

The sequence is that of Large ribosomal subunit protein bL32 from Hyphomonas neptunium (strain ATCC 15444).